The primary structure comprises 1158 residues: Hephaestin (1158 aa).

An N-terminal signal peptide occupies residues 1–23 (MESGHLLWALLFMQSLWPQLTDG). Plastocyanin-like domains lie at 24-206 (ATRV…LITC), 218-366 (QRQD…VKSC), 370-560 (PPVD…LLVC), 570-718 (KQKG…VSQC), 731-903 (AARI…LAIC), and 911-1067 (HGGR…SRTE). Over 24–1110 (ATRVYYLGIR…PIKNVEMLAS (1087 aa)) the chain is Extracellular. Residues G70 and Y73 each contribute to the Na(+) site. Cu(2+) is bound by residues H126 and H128. H126 lines the O2 pocket. Ca(2+) is bound by residues K134, D152, and D153. An N-linked (GlcNAc...) asparagine glycan is attached at N164. C180 and C206 are joined by a disulfide. Residues H186 and H188 each contribute to the Cu(2+) site. Residue H186 coordinates O2. N236 is a glycosylation site (N-linked (GlcNAc...) asparagine). S265 is a Na(+) binding site. C285 and C366 are joined by a disulfide. Residues H304, C347, and H352 each coordinate Cu(2+). 3 residues coordinate Na(+): F416, G425, and Y428. Residues C534 and C560 are joined by a disulfide bond. An N-linked (GlcNAc...) asparagine glycan is attached at N588. S617 contacts Na(+). The cysteines at positions 637 and 718 are disulfide-linked. Cu(2+) is bound by residues H656, C699, H704, and M709. 2 N-linked (GlcNAc...) asparagine glycosylation sites follow: N714 and N758. Residues F769 and G778 each coordinate Na(+). N829 and N873 each carry an N-linked (GlcNAc...) asparagine glycan. C877 and C903 are disulfide-bonded. N931 carries N-linked (GlcNAc...) asparagine glycosylation. Residues H1000, H1003, H1005, H1045, C1046, H1047, H1051, and M1056 each contribute to the Cu(2+) site. O2 is bound by residues H1003 and H1005. H1047 contacts O2. A helical membrane pass occupies residues 1111 to 1131 (VLVAISVTLLLVVLALGGVVW). Residues 1132–1158 (YQHRQRKLRRNRRSILDDSFKLLSFKQ) lie on the Cytoplasmic side of the membrane. Phosphoserine occurs at positions 1145, 1150, and 1155.

Belongs to the multicopper oxidase family. Part of a complex composed of SLC40A1/ferroportin, TF/transferrin and HEPH/hephaestin that transfers iron from cells to transferrin. Requires Cu cation as cofactor. In terms of tissue distribution, expressed by intestinal absorptive cells (at protein level). Also detected in breast, colon, bone trabecular cells and fibroblasts.

It localises to the basolateral cell membrane. It catalyses the reaction 4 Fe(2+) + O2 + 4 H(+) = 4 Fe(3+) + 2 H2O. Its function is as follows. Plasma membrane ferroxidase that mediates the extracellular conversion of ferrous/Fe(2+) iron into its ferric/Fe(3+) form. Couples ferroportin which specifically exports ferrous/Fe(2+) iron from cells to transferrin that only binds and shuttles extracellular ferric/Fe(3+) iron throughout the body. By helping iron transfer from cells to blood mainly contributes to dietary iron absorption by the intestinal epithelium and more generally regulates iron levels in the body. The chain is Hephaestin from Homo sapiens (Human).